Here is a 120-residue protein sequence, read N- to C-terminus: NAD(P)H-quinone oxidoreductase subunit 3 (120 aa).

The next 3 helical transmembrane spans lie at 6-26 (GYDAFLGFLLIAAAVPALALI), 64-84 (MFALVFVIFDVETVFLYPWAV), and 89-109 (LGVLAFIEALIFITILLVALA).

It belongs to the complex I subunit 3 family. NDH-1 can be composed of about 15 different subunits; different subcomplexes with different compositions have been identified which probably have different functions.

The protein localises to the cellular thylakoid membrane. It carries out the reaction a plastoquinone + NADH + (n+1) H(+)(in) = a plastoquinol + NAD(+) + n H(+)(out). The enzyme catalyses a plastoquinone + NADPH + (n+1) H(+)(in) = a plastoquinol + NADP(+) + n H(+)(out). In terms of biological role, NDH-1 shuttles electrons from an unknown electron donor, via FMN and iron-sulfur (Fe-S) centers, to quinones in the respiratory and/or the photosynthetic chain. The immediate electron acceptor for the enzyme in this species is believed to be plastoquinone. Couples the redox reaction to proton translocation, and thus conserves the redox energy in a proton gradient. Cyanobacterial NDH-1 also plays a role in inorganic carbon-concentration. This chain is NAD(P)H-quinone oxidoreductase subunit 3, found in Parasynechococcus marenigrum (strain WH8102).